A 309-amino-acid polypeptide reads, in one-letter code: Glutaminase (309 aa).

Substrate-binding residues include Ser64, Asn114, Glu160, Asn167, Tyr191, Tyr243, and Val261.

It belongs to the glutaminase family. In terms of assembly, homotetramer.

The catalysed reaction is L-glutamine + H2O = L-glutamate + NH4(+). This Methylobacterium nodulans (strain LMG 21967 / CNCM I-2342 / ORS 2060) protein is Glutaminase.